A 394-amino-acid chain; its full sequence is Quinolinate synthase (394 aa).

Histidine 57 and serine 74 together coordinate iminosuccinate. Cysteine 121 contributes to the [4Fe-4S] cluster binding site. Residues 153–155 and serine 174 contribute to the iminosuccinate site; that span reads YMN. [4Fe-4S] cluster is bound at residue cysteine 250. Iminosuccinate contacts are provided by residues 276 to 278 and threonine 293; that span reads HPE. Cysteine 340 contacts [4Fe-4S] cluster.

The protein belongs to the quinolinate synthase family. Type 3 subfamily. The cofactor is [4Fe-4S] cluster.

The protein resides in the cytoplasm. It catalyses the reaction iminosuccinate + dihydroxyacetone phosphate = quinolinate + phosphate + 2 H2O + H(+). The protein operates within cofactor biosynthesis; NAD(+) biosynthesis; quinolinate from iminoaspartate: step 1/1. Its function is as follows. Catalyzes the condensation of iminoaspartate with dihydroxyacetone phosphate to form quinolinate. This chain is Quinolinate synthase, found in Nocardioides sp. (strain ATCC BAA-499 / JS614).